The primary structure comprises 153 residues: SsrA-binding protein (153 aa).

It belongs to the SmpB family.

Its subcellular location is the cytoplasm. Required for rescue of stalled ribosomes mediated by trans-translation. Binds to transfer-messenger RNA (tmRNA), required for stable association of tmRNA with ribosomes. tmRNA and SmpB together mimic tRNA shape, replacing the anticodon stem-loop with SmpB. tmRNA is encoded by the ssrA gene; the 2 termini fold to resemble tRNA(Ala) and it encodes a 'tag peptide', a short internal open reading frame. During trans-translation Ala-aminoacylated tmRNA acts like a tRNA, entering the A-site of stalled ribosomes, displacing the stalled mRNA. The ribosome then switches to translate the ORF on the tmRNA; the nascent peptide is terminated with the 'tag peptide' encoded by the tmRNA and targeted for degradation. The ribosome is freed to recommence translation, which seems to be the essential function of trans-translation. The protein is SsrA-binding protein of Sulfurovum sp. (strain NBC37-1).